A 313-amino-acid polypeptide reads, in one-letter code: Phosphoenolpyruvate phosphomutase (313 aa).

The Nucleophile role is filled by aspartate 69.

It belongs to the isocitrate lyase/PEP mutase superfamily. PEP mutase family.

It carries out the reaction phosphoenolpyruvate + H(+) = 3-phosphonopyruvate. It functions in the pathway secondary metabolite biosynthesis; bialaphos biosynthesis. Its function is as follows. Formation of a carbon-phosphorus bond by converting phosphoenolpyruvate (PEP) to phosphonopyruvate (P-Pyr). In Streptomyces hygroscopicus, this protein is Phosphoenolpyruvate phosphomutase (bcpB).